Reading from the N-terminus, the 320-residue chain is Aminoacyl tRNA synthase complex-interacting multifunctional protein 2 (320 aa).

The disordered stretch occupies residues 31–52 (HSKTTSPATDAGHVQETSEPSL). Position 36 is a phosphoserine (serine 36). Residues 82–162 (TPDADLDVTN…HTHSSVKNVP (81 aa)) are interaction with PRKN. Positions 162–225 (PENLLKCFGE…FLFSLFGQKH (64 aa)) are interaction with TP53. A GST C-terminal domain is found at 220 to 317 (LFGQKHSAVN…NLVPFSTALQ (98 aa)).

In terms of assembly, part of the multisynthetase complex (MSC), a multisubunit complex that groups tRNA ligases for Arg (RARS1), Asp (DARS1), Gln (QARS1), Ile (IARS1), Leu (LARS1), Lys (KARS1), Met (MARS1) the bifunctional ligase for Glu and Pro (EPRS1) and the auxiliary subunits AIMP1/p43, AIMP2/p38 and EEF1E1/p18. Interacts (via N-terminus) with KARS1. Interacts with EPRS1. Forms a linear complex that contains MARS1, EEF1E1, EPRS1 and AIMP2 that is at the core of the multisubunit complex. Binds FUBP1 (via C-terminus). Interacts in both its unphosphorylated and phosphorylated forms with p53/TP53 (via N-terminus) in the nucleus following UV irradiation. Interacts (via N-terminus) with PRKN/parkin (via first RING-type domain). Interacts with TARS3. Post-translationally, phosphorylated on serine residues in response to UV irradiation. Ubiquitinated by PRKN, leading to its degradation by the proteasome.

It localises to the cytoplasm. Its subcellular location is the cytosol. It is found in the nucleus. In terms of biological role, required for assembly and stability of the aminoacyl-tRNA synthase complex. Mediates ubiquitination and degradation of FUBP1, a transcriptional activator of MYC, leading to MYC down-regulation which is required for aveolar type II cell differentiation. Blocks MDM2-mediated ubiquitination and degradation of p53/TP53. Functions as a proapoptotic factor. This Cricetulus griseus (Chinese hamster) protein is Aminoacyl tRNA synthase complex-interacting multifunctional protein 2 (AIMP2).